Here is a 460-residue protein sequence, read N- to C-terminus: Nitrogenase iron-iron protein beta chain (460 aa).

The [8Fe-7S] cluster site is built by Cys20, Cys45, Cys104, and Ser143.

The protein belongs to the NifD/NifK/NifE/NifN family. Hexamer of two alpha, two beta, and two delta chains. Requires [8Fe-7S] cluster as cofactor.

It carries out the reaction N2 + 8 reduced [2Fe-2S]-[ferredoxin] + 16 ATP + 16 H2O = H2 + 8 oxidized [2Fe-2S]-[ferredoxin] + 2 NH4(+) + 16 ADP + 16 phosphate + 6 H(+). Its function is as follows. This iron-iron protein is part of the nitrogenase complex that catalyzes the key enzymatic reactions in nitrogen fixation. Other nitrogenase complexes utilize a molybdenum-iron protein or a vanadium-iron protein. This Rhodobacter capsulatus (Rhodopseudomonas capsulata) protein is Nitrogenase iron-iron protein beta chain (anfK).